A 231-amino-acid polypeptide reads, in one-letter code: Demethylmenaquinone methyltransferase (231 aa).

S-adenosyl-L-methionine is bound by residues Thr-62, Asp-80, Asp-100–Ala-101, and Ser-117.

Belongs to the class I-like SAM-binding methyltransferase superfamily. MenG/UbiE family.

It catalyses the reaction a 2-demethylmenaquinol + S-adenosyl-L-methionine = a menaquinol + S-adenosyl-L-homocysteine + H(+). It participates in quinol/quinone metabolism; menaquinone biosynthesis; menaquinol from 1,4-dihydroxy-2-naphthoate: step 2/2. Functionally, methyltransferase required for the conversion of demethylmenaquinol (DMKH2) to menaquinol (MKH2). This Mycobacterium marinum (strain ATCC BAA-535 / M) protein is Demethylmenaquinone methyltransferase.